Consider the following 123-residue polypeptide: Large ribosomal subunit protein bL12 (123 aa).

This sequence belongs to the bacterial ribosomal protein bL12 family. Homodimer. Part of the ribosomal stalk of the 50S ribosomal subunit. Forms a multimeric L10(L12)X complex, where L10 forms an elongated spine to which 2 to 4 L12 dimers bind in a sequential fashion. Binds GTP-bound translation factors.

Functionally, forms part of the ribosomal stalk which helps the ribosome interact with GTP-bound translation factors. Is thus essential for accurate translation. The sequence is that of Large ribosomal subunit protein bL12 from Rhodopseudomonas palustris (strain HaA2).